Here is a 570-residue protein sequence, read N- to C-terminus: 5-aminolevulinate synthase, mitochondrial (570 aa).

A mitochondrion-targeting transit peptide spans 1–53 (MESVIRSSAKICPFMHSATGSMQSVKALKNANLPAIAQQCPFMGKAMEQRRGY). Residues R119, S232, and K251 each coordinate substrate. Pyridoxal 5'-phosphate contacts are provided by S284, H312, and T356. K359 is an active-site residue. K359 carries the post-translational modification N6-(pyridoxal phosphate)lysine. Pyridoxal 5'-phosphate-binding residues include T388 and T389. A substrate-binding site is contributed by T474.

The protein belongs to the class-II pyridoxal-phosphate-dependent aminotransferase family. As to quaternary structure, homodimer. The cofactor is pyridoxal 5'-phosphate.

The protein resides in the mitochondrion matrix. It catalyses the reaction succinyl-CoA + glycine + H(+) = 5-aminolevulinate + CO2 + CoA. Its pathway is porphyrin-containing compound metabolism; protoporphyrin-IX biosynthesis; 5-aminolevulinate from glycine: step 1/1. Functionally, catalyzes the synthesis of 5-aminolevulinate (ALA) from succinyl-CoA and glycine, the first and rate-limiting step in heme biosynthesis. This Kluyveromyces lactis (strain ATCC 8585 / CBS 2359 / DSM 70799 / NBRC 1267 / NRRL Y-1140 / WM37) (Yeast) protein is 5-aminolevulinate synthase, mitochondrial (HEM1).